We begin with the raw amino-acid sequence, 178 residues long: M-phase-specific PLK1-interacting protein (178 aa).

Pro residues predominate over residues 1 to 15; that stretch reads MHRPNFRPPTPPYPS. Residues 1–134 form a disordered region; the sequence is MHRPNFRPPT…RGREKRMSNE (134 aa). Residues 17–34 show a composition bias toward gly residues; sequence GIGGWGGGNNFRGALGGG. At Arg-36 the chain carries Asymmetric dimethylarginine. Phosphoserine occurs at positions 39 and 46. Phosphothreonine is present on Thr-50. Position 56 is an omega-N-methylarginine (Arg-56). Asymmetric dimethylarginine is present on residues Arg-58, Arg-67, and Arg-76. A compositionally biased stretch (low complexity) spans 78 to 96; sequence GSPSPGGYPGSYSRSPAGS. 5 positions are modified to phosphoserine: Ser-79, Ser-81, Ser-92, Ser-103, and Ser-114. A compositionally biased stretch (polar residues) spans 97 to 121; sequence QHQFGYSPGQQQTYPQGSPRTSTPF. An Omega-N-methylarginine modification is found at Arg-116. Thr-119 carries the phosphothreonine modification. 2 positions are modified to phosphoserine: Ser-123 and Ser-132.

In terms of assembly, interacts with PLK1; phosphorylation-dependent. Phosphorylated during mitosis in the cell cycle probably by CDK1.

The protein localises to the nucleus. The protein resides in the cytoplasm. Its subcellular location is the cytoskeleton. It is found in the microtubule organizing center. It localises to the centrosome. Its function is as follows. May play a role in maintenance of cell cycle integrity by regulating mitosis or cytokinesis. In Mus musculus (Mouse), this protein is M-phase-specific PLK1-interacting protein (Mplkip).